Here is a 367-residue protein sequence, read N- to C-terminus: Glutamate 5-kinase (367 aa).

Lys-9 is an ATP binding site. Ser-49, Asp-136, and Asn-148 together coordinate substrate. ATP contacts are provided by residues 168 to 169 (TD) and 210 to 216 (TGGMKSK). The PUA domain occupies 276–350 (SGQIEVDAGA…GMQSQDIQVR (75 aa)).

This sequence belongs to the glutamate 5-kinase family.

It is found in the cytoplasm. It catalyses the reaction L-glutamate + ATP = L-glutamyl 5-phosphate + ADP. It functions in the pathway amino-acid biosynthesis; L-proline biosynthesis; L-glutamate 5-semialdehyde from L-glutamate: step 1/2. Catalyzes the transfer of a phosphate group to glutamate to form L-glutamate 5-phosphate. This chain is Glutamate 5-kinase, found in Bacillus cereus (strain B4264).